The sequence spans 133 residues: Small ribosomal subunit protein uS11 (133 aa).

The disordered stretch occupies residues 114-133; sequence VTPIPHDGTRPPGGKRGRRV.

Belongs to the universal ribosomal protein uS11 family. In terms of assembly, part of the 30S ribosomal subunit.

Functionally, located on the platform of the 30S subunit. This chain is Small ribosomal subunit protein uS11, found in Archaeoglobus fulgidus (strain ATCC 49558 / DSM 4304 / JCM 9628 / NBRC 100126 / VC-16).